The chain runs to 282 residues: Dof zinc finger protein 4 (282 aa).

A Dof-type zinc finger spans residues Val-45 to Arg-99. The Zn(2+) site is built by Cys-47, Cys-50, Cys-72, and Cys-75. The segment at Pro-89 to Thr-161 is disordered. 2 stretches are compositionally biased toward low complexity: residues Ser-102–Thr-117 and Arg-125–Thr-161.

It is found in the nucleus. Transcription factor that may transactivate seed storage protein genes in developing seeds. The protein is Dof zinc finger protein 4 of Oryza sativa subsp. japonica (Rice).